Here is a 312-residue protein sequence, read N- to C-terminus: tRNA pseudouridine synthase B (312 aa).

Residue Asp38 is the Nucleophile of the active site.

The protein belongs to the pseudouridine synthase TruB family. Type 1 subfamily.

The enzyme catalyses uridine(55) in tRNA = pseudouridine(55) in tRNA. In terms of biological role, responsible for synthesis of pseudouridine from uracil-55 in the psi GC loop of transfer RNAs. This is tRNA pseudouridine synthase B from Syntrophus aciditrophicus (strain SB).